The sequence spans 317 residues: tRNA pseudouridine synthase B (317 aa).

D47 serves as the catalytic Nucleophile.

This sequence belongs to the pseudouridine synthase TruB family. Type 1 subfamily.

It catalyses the reaction uridine(55) in tRNA = pseudouridine(55) in tRNA. Responsible for synthesis of pseudouridine from uracil-55 in the psi GC loop of transfer RNAs. The polypeptide is tRNA pseudouridine synthase B (Shewanella woodyi (strain ATCC 51908 / MS32)).